We begin with the raw amino-acid sequence, 167 residues long: Leptin (167 aa).

The first 21 residues, 1–21 (MLCGPLCRFLWLWPYLSYVEA), serve as a signal peptide directing secretion. C117 and C167 are joined by a disulfide.

It belongs to the leptin family.

Its subcellular location is the secreted. Key player in the regulation of energy balance and body weight control. Once released into the circulation, has central and peripheral effects by binding LEPR, found in many tissues, which results in the activation of several major signaling pathways. In the hypothalamus, acts as an appetite-regulating factor that induces a decrease in food intake and an increase in energy consumption by inducing anorexinogenic factors and suppressing orexigenic neuropeptides, also regulates bone mass and secretion of hypothalamo-pituitary-adrenal hormones. In the periphery, increases basal metabolism, influences reproductive function, regulates pancreatic beta-cell function and insulin secretion, is pro-angiogenic for endothelial cell and affects innate and adaptive immunity. In the arcuate nucleus of the hypothalamus, activates by depolarization POMC neurons inducing FOS and SOCS3 expression to release anorexigenic peptides and inhibits by hyperpolarization NPY neurons inducing SOCS3 with a consequent reduction on release of orexigenic peptides. In addition to its known satiety inducing effect, has a modulatory role in nutrient absorption. In the intestine, reduces glucose absorption by enterocytes by activating PKC and leading to a sequential activation of p38, PI3K and ERK signaling pathways which exerts an inhibitory effect on glucose absorption. Acts as a growth factor on certain tissues, through the activation of different signaling pathways increases expression of genes involved in cell cycle regulation such as CCND1, via JAK2-STAT3 pathway, or VEGFA, via MAPK1/3 and PI3K-AKT1 pathways. May also play an apoptotic role via JAK2-STAT3 pathway and up-regulation of BIRC5 expression. Pro-angiogenic, has mitogenic activity on vascular endothelial cells and plays a role in matrix remodeling by regulating the expression of matrix metalloproteinases (MMPs) and tissue inhibitors of metalloproteinases (TIMPs). In innate immunity, modulates the activity and function of neutrophils by increasing chemotaxis and the secretion of oxygen radicals. Increases phagocytosis by macrophages and enhances secretion of pro-inflammatory mediators. Increases cytotoxic ability of NK cells. Plays a pro-inflammatory role, in synergy with IL1B, by inducing NOS2 which promotes the production of IL6, IL8 and Prostaglandin E2, through a signaling pathway that involves JAK2, PI3K, MAP2K1/MEK1 and MAPK14/p38. In adaptive immunity, promotes the switch of memory T-cells towards T helper-1 cell immune responses. Increases CD4(+)CD25(-) T-cell proliferation and reduces autophagy during TCR (T-cell receptor) stimulation, through MTOR signaling pathway activation and BCL2 up-regulation. The protein is Leptin (LEP) of Felis catus (Cat).